The chain runs to 416 residues: Lipid phosphate phosphatase delta (416 aa).

The next 2 helical transmembrane spans lie at 72–92 (FFSGLSCVVSVPFYTAFLPLL) and 104–124 (MTLLIAFCDYLGNCIKDVVSA). Residues 119–127 (KDVVSAPRP) are phosphatase sequence motif I. The tract at residues 151 to 154 (PSSH) is phosphatase sequence motif II. His-154 (proton donor) is an active-site residue. A helical transmembrane segment spans residues 178–198 (VSIQYYGFALACLLVALIAFG). The interval 198 to 209 (GRVYLGMHSVVD) is phosphatase sequence motif III. The active-site Nucleophile is His-205. The next 5 helical transmembrane spans lie at 207-227 (VVDIVSGLAIGVLILGLWLTV), 241-261 (VSSFWTALSFLLLFAYPTPEH), 266-286 (YEYHTAFNGVTLGIVTGVQQT), 302-322 (ELPISSYLGRVMVGIPTILLV), and 393-413 (FFQYAGLAWSVVDLVPSLFSY).

Belongs to the type 2 lipid phosphate phosphatase family.

It localises to the endoplasmic reticulum membrane. Functionally, functions as a sphingoid long-chain base phosphate (LCBP) phosphatase. May play a role in the regulation of LCBP levels and be involved in stomatal responses through LCBP-mediated ABA signaling. The polypeptide is Lipid phosphate phosphatase delta (LPPD) (Arabidopsis thaliana (Mouse-ear cress)).